We begin with the raw amino-acid sequence, 276 residues long: Large ribosomal subunit protein uL2 (276 aa).

A disordered region spans residues 218–276; the sequence is PYVRGSAMNPVDHPHGGGEGRAPIGRPAPSTPWGKPALGLKTRKKNKKSNKYIVRRRKK. Positions 258 to 276 are enriched in basic residues; sequence KTRKKNKKSNKYIVRRRKK.

It belongs to the universal ribosomal protein uL2 family. Part of the 50S ribosomal subunit. Forms a bridge to the 30S subunit in the 70S ribosome.

In terms of biological role, one of the primary rRNA binding proteins. Required for association of the 30S and 50S subunits to form the 70S ribosome, for tRNA binding and peptide bond formation. It has been suggested to have peptidyltransferase activity; this is somewhat controversial. Makes several contacts with the 16S rRNA in the 70S ribosome. This Finegoldia magna (strain ATCC 29328 / DSM 20472 / WAL 2508) (Peptostreptococcus magnus) protein is Large ribosomal subunit protein uL2.